The chain runs to 221 residues: Chalcone--flavanone isomerase (221 aa).

The substrate site is built by threonine 50, asparagine 115, and threonine 192.

The protein belongs to the chalcone isomerase family.

The enzyme catalyses a chalcone = a flavanone.. It functions in the pathway secondary metabolite biosynthesis; flavonoid biosynthesis. In terms of biological role, catalyzes the intramolecular cyclization of bicyclic chalcones into tricyclic (S)-flavanones. Responsible for the isomerization of 4,2',4',6'-tetrahydroxychalcone (also termed chalcone) into naringenin. This is Chalcone--flavanone isomerase (CHI) from Phaseolus vulgaris (Kidney bean).